Here is a 313-residue protein sequence, read N- to C-terminus: tRNA-cytidine(32) 2-sulfurtransferase (313 aa).

The short motif at 50–55 is the PP-loop motif element; sequence SGGKDS. Cys-125, Cys-128, and Cys-216 together coordinate [4Fe-4S] cluster.

Belongs to the TtcA family. In terms of assembly, homodimer. Requires Mg(2+) as cofactor. [4Fe-4S] cluster is required as a cofactor.

It is found in the cytoplasm. The catalysed reaction is cytidine(32) in tRNA + S-sulfanyl-L-cysteinyl-[cysteine desulfurase] + AH2 + ATP = 2-thiocytidine(32) in tRNA + L-cysteinyl-[cysteine desulfurase] + A + AMP + diphosphate + H(+). Its pathway is tRNA modification. In terms of biological role, catalyzes the ATP-dependent 2-thiolation of cytidine in position 32 of tRNA, to form 2-thiocytidine (s(2)C32). The sulfur atoms are provided by the cysteine/cysteine desulfurase (IscS) system. The sequence is that of tRNA-cytidine(32) 2-sulfurtransferase from Haemophilus influenzae (strain ATCC 51907 / DSM 11121 / KW20 / Rd).